A 325-amino-acid chain; its full sequence is uncharacterized protein (325 aa).

Y59 serves as the catalytic Proton donor. H117 serves as a coordination point for substrate.

Belongs to the aldo/keto reductase family.

It localises to the cytoplasm. The protein localises to the nucleus. This is an uncharacterized protein from Schizosaccharomyces pombe (strain 972 / ATCC 24843) (Fission yeast).